Reading from the N-terminus, the 109-residue chain is Elicitor peptide 2 (109 aa).

Residues 1–73 (MEKLDKRREE…KDDDVVVLLR (73 aa)) constitute a propeptide that is removed on maturation. The segment covering 74-88 (DNKAKSKKRDKEKPS) has biased composition (basic and acidic residues). A disordered region spans residues 74 to 109 (DNKAKSKKRDKEKPSSGRPGQTNSVPNAAIQVYKED).

This sequence belongs to the brassicaceae elicitor peptide family.

Its function is as follows. Elicitor of plant defense. The protein is Elicitor peptide 2 (PEP2) of Arabidopsis thaliana (Mouse-ear cress).